We begin with the raw amino-acid sequence, 381 residues long: E3 ubiquitin-protein ligase At1g63170 (381 aa).

The tract at residues 1 to 23 (MSRETTTEATPLILTDGGGGRRS) is disordered. Helical transmembrane passes span 74–94 (VVVL…AVLV) and 107–127 (VWII…CVEY). The tract at residues 135–161 (RRDLSPRSSSSSSSSSSSMDEEEGLGL) is disordered. A compositionally biased stretch (low complexity) spans 140–152 (PRSSSSSSSSSSS). The stretch at 170–194 (LELGQLENENNSFAKHLESANTMIS) forms a coiled coil. 3 consecutive transmembrane segments (helical) span residues 189–209 (ANTM…SSGG), 224–244 (IVFL…ACVI), and 245–265 (GIAV…VAEQ). The segment at 325–366 (CCICLSAYEDETELRELPCGHHFHCGCVDKWLYINATCPLCK) adopts an RING-type; atypical zinc-finger fold.

It is found in the membrane. The enzyme catalyses S-ubiquitinyl-[E2 ubiquitin-conjugating enzyme]-L-cysteine + [acceptor protein]-L-lysine = [E2 ubiquitin-conjugating enzyme]-L-cysteine + N(6)-ubiquitinyl-[acceptor protein]-L-lysine.. It functions in the pathway protein modification; protein ubiquitination. In terms of biological role, mediates E2-dependent protein ubiquitination. This Arabidopsis thaliana (Mouse-ear cress) protein is E3 ubiquitin-protein ligase At1g63170.